The primary structure comprises 227 residues: ATP synthase subunit a (227 aa).

A run of 6 helical transmembrane segments spans residues 14 to 34 (LLNIPLVLLALIMPWKLFVSF), 69 to 89 (WVVLFSSLMLMLMTLNVIGLF), 98 to 118 (QLSMNLGLAVPLWLGTVVYGF), 137 to 157 (LLVPVLVVVETLSILMRPLAL), 169 to 189 (HLLMHLISSAVLGLMELSVML), and 205 to 223 (IAVALIQGYVFAILVTLYL).

The protein belongs to the ATPase A chain family. In terms of assembly, F-type ATPases have 2 components, CF(1) - the catalytic core - and CF(0) - the membrane proton channel. CF(1) has five subunits: alpha(3), beta(3), gamma(1), delta(1), epsilon(1). CF(0) has three main subunits: a, b and c.

The protein localises to the mitochondrion inner membrane. In terms of biological role, mitochondrial membrane ATP synthase (F(1)F(0) ATP synthase or Complex V) produces ATP from ADP in the presence of a proton gradient across the membrane which is generated by electron transport complexes of the respiratory chain. F-type ATPases consist of two structural domains, F(1) - containing the extramembraneous catalytic core and F(0) - containing the membrane proton channel, linked together by a central stalk and a peripheral stalk. During catalysis, ATP synthesis in the catalytic domain of F(1) is coupled via a rotary mechanism of the central stalk subunits to proton translocation. Key component of the proton channel; it may play a direct role in the translocation of protons across the membrane. In Branchiostoma floridae (Florida lancelet), this protein is ATP synthase subunit a (ATP6).